A 258-amino-acid chain; its full sequence is Indole-3-glycerol phosphate synthase (258 aa).

It belongs to the TrpC family.

It catalyses the reaction 1-(2-carboxyphenylamino)-1-deoxy-D-ribulose 5-phosphate + H(+) = (1S,2R)-1-C-(indol-3-yl)glycerol 3-phosphate + CO2 + H2O. It participates in amino-acid biosynthesis; L-tryptophan biosynthesis; L-tryptophan from chorismate: step 4/5. The chain is Indole-3-glycerol phosphate synthase from Geobacillus kaustophilus (strain HTA426).